Here is a 178-residue protein sequence, read N- to C-terminus: Fatty-acid and retinol-binding protein 1 (178 aa).

The signal sequence occupies residues 1–16; sequence MYHQLILMALIGVIMA. N-linked (GlcNAc...) asparagine glycosylation is found at Asn-44 and Asn-75. Coiled-coil stretches lie at residues 67–89 and 122–154; these read DAAL…ELRN and QKLD…LKAT. The N-linked (GlcNAc...) asparagine glycan is linked to Asn-157.

It belongs to the fatty-acid and retinol-binding protein (FARBP) family. In terms of processing, N-glycosylated.

It is found in the secreted. Its function is as follows. Binds retinol and different fatty acids. This is Fatty-acid and retinol-binding protein 1 from Onchocerca dukei (Filarial nematode worm).